A 520-amino-acid chain; its full sequence is Glutamate--cysteine ligase (520 aa).

It belongs to the glutamate--cysteine ligase type 1 family. Type 1 subfamily.

It catalyses the reaction L-cysteine + L-glutamate + ATP = gamma-L-glutamyl-L-cysteine + ADP + phosphate + H(+). The protein operates within sulfur metabolism; glutathione biosynthesis; glutathione from L-cysteine and L-glutamate: step 1/2. This Serratia proteamaculans (strain 568) protein is Glutamate--cysteine ligase.